The chain runs to 86 residues: MNSKIFAVLFLLAFLSCVLSDQYCPKSSITACKKMNIRNDCCKDDDCTGGSWCCATPCGNFCKYPTDRPGGKRAAGGKSCKTGYVY.

Residues Met-1–Ser-20 form the signal peptide. The 46-residue stretch at Asp-21 to Thr-66 folds into the WAP domain. Intrachain disulfides connect Cys-24–Cys-54, Cys-32–Cys-58, Cys-41–Cys-53, Cys-42–Cys-80, and Cys-47–Cys-62.

It belongs to the venom protein 11 family. 01 (wap-1) subfamily. In terms of processing, contains 5 disulfide bonds. In terms of tissue distribution, expressed by the venom gland.

Its subcellular location is the secreted. Has antibacterial activity. The protein is U15-lycotoxin-Ls1d of Lycosa singoriensis (Wolf spider).